Consider the following 224-residue polypeptide: (S)-2-haloacid dehalogenase H-109 (224 aa).

D10 acts as the Nucleophile in catalysis. An (S)-2-haloacid contacts are provided by residues L11 to Y12, R41, and S118 to N119. The segment at S175 to D180 is important for catalytic activity.

This sequence belongs to the HAD-like hydrolase superfamily. S-2-haloalkanoic acid dehalogenase family.

The catalysed reaction is an (S)-2-haloacid + H2O = a (2R)-2-hydroxycarboxylate + a halide anion + H(+). The enzyme catalyses (S)-2-chloropropanoate + H2O = (R)-lactate + chloride + H(+). Its function is as follows. Catalyzes the hydrolytic dehalogenation of small (S)-2-haloalkanoic acids to yield the corresponding (R)-2-hydroxyalkanoic acids. Acts on acids of short chain lengths, C(2) to C(4), with inversion of configuration at C-2. Active with 2-halogenated carboxylic acids and converts only the S-isomer (or L-isomer) of 2-chloropropionic acid with inversion of configuration to produce R-lactate (or D-isomer). This chain is (S)-2-haloacid dehalogenase H-109, found in Pseudomonas putida (Arthrobacter siderocapsulatus).